The chain runs to 200 residues: dITP/XTP pyrophosphatase (200 aa).

Residue 7-12 participates in substrate binding; that stretch reads SNNYHK. Aspartate 68 functions as the Proton acceptor in the catalytic mechanism. Aspartate 68 is a Mg(2+) binding site. Substrate contacts are provided by residues serine 69, 147-150, lysine 170, and 175-176; these read FGYD and HR.

The protein belongs to the HAM1 NTPase family. As to quaternary structure, homodimer. It depends on Mg(2+) as a cofactor.

It carries out the reaction XTP + H2O = XMP + diphosphate + H(+). The enzyme catalyses dITP + H2O = dIMP + diphosphate + H(+). It catalyses the reaction ITP + H2O = IMP + diphosphate + H(+). Functionally, pyrophosphatase that catalyzes the hydrolysis of nucleoside triphosphates to their monophosphate derivatives, with a high preference for the non-canonical purine nucleotides XTP (xanthosine triphosphate), dITP (deoxyinosine triphosphate) and ITP. Seems to function as a house-cleaning enzyme that removes non-canonical purine nucleotides from the nucleotide pool, thus preventing their incorporation into DNA/RNA and avoiding chromosomal lesions. The polypeptide is dITP/XTP pyrophosphatase (Acholeplasma laidlawii (strain PG-8A)).